Consider the following 831-residue polypeptide: Intraflagellar transport protein 88 (831 aa).

TPR repeat units lie at residues 68–101, 120–153, 156–189, 248–281, 492–525, 526–559, 560–593, 595–627, 632–665, 666–699, and 700–733; these read IFKLLRDGMSAASCKDYVTALGRIREAIKLEQKV, TCIWMHWAQIQALGGQPEMALSTYEKIVKTAEGA, AQIRFNMGNINHNLGKYNEALKNFRMAIDQASPS, FDPLYTVLIGYYALGVPEKMIDAYSRLIDSSILI, RGVHTNIAFIYYLKGDYEASARHAQIALEIDPYD, SFAHINLGCTYSKTNQWELSLREFLKAQEINMES, VQATYNAGLVYFKQQEYKTAYSCFQKVASKLPSY, DAIYMSADCLARMSQIDEAIQMLSNLVTMFSAV, PSIYIRLGELYSIAGDEGQAAHYFKEAHRLVPFS, LAVINWLGSHYIKNELYEQARVCFEKASRVDTTT, and PKWSLAVAACLRKSKQYRDAIYEYKHILKRFPTN. The interval 785-816 is disordered; sequence RRNSVAAVGPGSRAGQDRFEASNNRVSSNTGD. Positions 805–815 are enriched in polar residues; the sequence is ASNNRVSSNTG.

The protein localises to the cell projection. Its subcellular location is the cilium. It is found in the flagellum. The protein resides in the cytoplasm. It localises to the cytoskeleton. The protein localises to the flagellum axoneme. Its subcellular location is the flagellum basal body. Functionally, component of the intraflagellar transport complex B (IFT-B) involved in flagellar assembly. In Giardia intestinalis (strain ATCC 50803 / WB clone C6) (Giardia lamblia), this protein is Intraflagellar transport protein 88.